The following is a 283-amino-acid chain: MKQYLELCRRIVDEGHWVENERTGKRCLTVINADLTYDVANNQFPLVTTRKSFWKAAVAELLGYIRGYDNAEDFRKLGTKTWDANANLNDAWLNNPYRKGEDDMGRVYGVQGRAWAKPDGGHIDQLRKIVDDLTRGVDDRGEILNFYNPGEFHMGCLRPCMYSHHFSLLGDTLYLNSTQRSCDVPLGLNFNMVQVYVFLAIMAQITGKKPGQAFHKIVNAHIYEDQLALMRDVQLKREPLQAPTFHINPEIKSLEDLETWVTLDDFWVEGYEHHDPIQYPFSV.

Arg22 is a dUMP binding site. Cys160 serves as the catalytic Nucleophile. Residues 180–183 (RSCD), Asn191, and 221–223 (HIY) contribute to the dUMP site. Asp183 is a (6R)-5,10-methylene-5,6,7,8-tetrahydrofolate binding site. Residue Ser282 participates in (6R)-5,10-methylene-5,6,7,8-tetrahydrofolate binding.

Belongs to the thymidylate synthase family. Bacterial-type ThyA subfamily. As to quaternary structure, homodimer.

The protein resides in the cytoplasm. The enzyme catalyses dUMP + (6R)-5,10-methylene-5,6,7,8-tetrahydrofolate = 7,8-dihydrofolate + dTMP. Its pathway is pyrimidine metabolism; dTTP biosynthesis. Its function is as follows. Catalyzes the reductive methylation of 2'-deoxyuridine-5'-monophosphate (dUMP) to 2'-deoxythymidine-5'-monophosphate (dTMP) while utilizing 5,10-methylenetetrahydrofolate (mTHF) as the methyl donor and reductant in the reaction, yielding dihydrofolate (DHF) as a by-product. This enzymatic reaction provides an intracellular de novo source of dTMP, an essential precursor for DNA biosynthesis. The sequence is that of Thymidylate synthase from Vibrio vulnificus (strain CMCP6).